A 526-amino-acid chain; its full sequence is Probable inorganic phosphate transporter 1-3 (526 aa).

Residues 1-21 (MADGQLKVLTTLDHARTQWYH) are Cytoplasmic-facing. Residues 22 to 42 (FMAIVIAGMGFFTDAYDLFCI) form a helical membrane-spanning segment. At 43-70 (SLVSKLLGRIYYTDLAGDNPGSLPPNVS) the chain is on the extracellular side. A helical membrane pass occupies residues 71–91 (AAVNGVALCGTLAGQLFFGWL). The Cytoplasmic portion of the chain corresponds to 92–99 (GDKLGRKS). Residues 100–120 (VYGFTLVLMVVCSVASGLSFG) traverse the membrane as a helical segment. Topologically, residues 121-124 (RTAK) are extracellular. A helical transmembrane segment spans residues 125 to 145 (GVVATLCFFRFWLGFGIGGDY). At 146–163 (PLSATIMSEYANKRTRGA) the chain is on the cytoplasmic side. A helical membrane pass occupies residues 164 to 184 (FIAAVFAMQGFGILFGAIVAL). Residues 185 to 211 (VVSAGFRNAYPAPSYADGRAASLVPEA) lie on the Extracellular side of the membrane. The helical transmembrane segment at 212-232 (DYVWRIILMFGTVPAALTYYW) threads the bilayer. Topologically, residues 233 to 294 (RMKMPETARY…GLFSRQFVRR (62 aa)) are cytoplasmic. The helical transmembrane segment at 295 to 315 (HGVHLVATTSTWFLLDIAFYS) threads the bilayer. The Extracellular segment spans residues 316-349 (QNLFQKDIFSKVGWIPPARTMNAVEEVFRIARAQ). The chain crosses the membrane as a helical span at residues 350–370 (ALIALCGTIPGYWFTVAFIDV). Residues 371 to 373 (AGR) lie on the Cytoplasmic side of the membrane. Residues 374–394 (FAIQLMGFAMMTVFMLGLAAP) form a helical membrane-spanning segment. The Extracellular segment spans residues 395–407 (YHHWTTPGNHTGF). The chain crosses the membrane as a helical span at residues 408 to 428 (VVMYGFTFFFANFGPNATTFI). The Cytoplasmic segment spans residues 429-444 (VPAEIYPARLRSTCHG). Residues 445–465 (ISAAAGKAGAIVGAFGFLYAA) traverse the membrane as a helical segment. Residues 466–483 (QDPHKPEAGYKPGIGIRN) are Extracellular-facing. Residues 484 to 504 (ALFVLAGTNFLGMLMTLLVPE) traverse the membrane as a helical segment. Over 505 to 526 (SKGMSLEEVSKENVADDEEATA) the chain is Cytoplasmic.

This sequence belongs to the major facilitator superfamily. Phosphate:H(+) symporter (TC 2.A.1.9) family. As to expression, expressed at low levels in roots.

The protein localises to the membrane. Functionally, high-affinity transporter for external inorganic phosphate. The protein is Probable inorganic phosphate transporter 1-3 (PHT1-3) of Oryza sativa subsp. japonica (Rice).